Here is a 504-residue protein sequence, read N- to C-terminus: Glycerol kinase (504 aa).

Residue T16 coordinates ADP. 2 residues coordinate ATP: T16 and T17. Position 16 (T16) interacts with sn-glycerol 3-phosphate. R20 lines the ADP pocket. Sn-glycerol 3-phosphate-binding residues include R86, E87, Y138, and D247. R86, E87, Y138, D247, and Q248 together coordinate glycerol. ADP-binding residues include T269 and G316. ATP is bound by residues T269, G316, Q320, and G417. Positions 417 and 421 each coordinate ADP.

Belongs to the FGGY kinase family.

It carries out the reaction glycerol + ATP = sn-glycerol 3-phosphate + ADP + H(+). The protein operates within polyol metabolism; glycerol degradation via glycerol kinase pathway; sn-glycerol 3-phosphate from glycerol: step 1/1. Its activity is regulated as follows. Inhibited by fructose 1,6-bisphosphate (FBP). Key enzyme in the regulation of glycerol uptake and metabolism. Catalyzes the phosphorylation of glycerol to yield sn-glycerol 3-phosphate. This Trichodesmium erythraeum (strain IMS101) protein is Glycerol kinase.